Here is a 395-residue protein sequence, read N- to C-terminus: Major outer membrane porin, serovar F (395 aa).

The first 22 residues, 1–22 (MKKLLKSVLVFAALSSASSLQA), serve as a signal peptide directing secretion.

This sequence belongs to the chlamydial porin (CP) (TC 1.B.2) family. Part of a disulfide cross-linked outer membrane complex (COMC) composed of the major outer membrane porin (MOMP), the small cysteine-rich protein (OmcA) and the large cysteine-rich periplasmic protein (OmcB).

It localises to the cell outer membrane. Its function is as follows. In elementary bodies (EBs, the infectious stage, which is able to survive outside the host cell) provides the structural integrity of the outer envelope through disulfide cross-links with the small cysteine-rich protein and the large cysteine-rich periplasmic protein. It has been described in publications as the Sarkosyl-insoluble COMC (Chlamydia outer membrane complex), and serves as the functional equivalent of peptidoglycan. Functionally, permits diffusion of specific solutes through the outer membrane. The polypeptide is Major outer membrane porin, serovar F (ompA) (Chlamydia trachomatis).